We begin with the raw amino-acid sequence, 156 residues long: Ribosomal RNA large subunit methyltransferase H (156 aa).

S-adenosyl-L-methionine-binding positions include Leu-73, Gly-104, and 123-128; that span reads ISSMTL.

The protein belongs to the RNA methyltransferase RlmH family. Homodimer.

Its subcellular location is the cytoplasm. The enzyme catalyses pseudouridine(1915) in 23S rRNA + S-adenosyl-L-methionine = N(3)-methylpseudouridine(1915) in 23S rRNA + S-adenosyl-L-homocysteine + H(+). In terms of biological role, specifically methylates the pseudouridine at position 1915 (m3Psi1915) in 23S rRNA. This chain is Ribosomal RNA large subunit methyltransferase H, found in Burkholderia lata (strain ATCC 17760 / DSM 23089 / LMG 22485 / NCIMB 9086 / R18194 / 383).